We begin with the raw amino-acid sequence, 436 residues long: Serine hydroxymethyltransferase (436 aa).

(6S)-5,6,7,8-tetrahydrofolate-binding positions include L133 and 137 to 139; that span reads GHL. Residue K242 is modified to N6-(pyridoxal phosphate)lysine. 366-368 serves as a coordination point for (6S)-5,6,7,8-tetrahydrofolate; it reads SPF.

This sequence belongs to the SHMT family. Homodimer. Requires pyridoxal 5'-phosphate as cofactor.

It localises to the cytoplasm. The catalysed reaction is (6R)-5,10-methylene-5,6,7,8-tetrahydrofolate + glycine + H2O = (6S)-5,6,7,8-tetrahydrofolate + L-serine. The protein operates within one-carbon metabolism; tetrahydrofolate interconversion. Its pathway is amino-acid biosynthesis; glycine biosynthesis; glycine from L-serine: step 1/1. Its function is as follows. Catalyzes the reversible interconversion of serine and glycine with tetrahydrofolate (THF) serving as the one-carbon carrier. This reaction serves as the major source of one-carbon groups required for the biosynthesis of purines, thymidylate, methionine, and other important biomolecules. Also exhibits THF-independent aldolase activity toward beta-hydroxyamino acids, producing glycine and aldehydes, via a retro-aldol mechanism. The protein is Serine hydroxymethyltransferase of Novosphingobium aromaticivorans (strain ATCC 700278 / DSM 12444 / CCUG 56034 / CIP 105152 / NBRC 16084 / F199).